The following is a 566-amino-acid chain: Type 3 secretion system secretin (566 aa).

The first 22 residues, 1–22 (MKKFNIKSLTLLIVLLPLIVNA), serve as a signal peptide directing secretion.

It belongs to the bacterial secretin family. T3SS SctC subfamily. In terms of assembly, the core secretion machinery of the T3SS is composed of approximately 20 different proteins, including cytoplasmic components, a base, an export apparatus and a needle. This subunit is part of the base, which anchors the injectisome in the bacterial cell envelope. Forms a stable homooligomeric complex. Interacts with the pilotin MxiM/SctG and the inner membrane ring outer protein MxiJ/SctJ.

The protein resides in the cell outer membrane. Its function is as follows. Component of the type III secretion system (T3SS), also called injectisome, which is used to inject bacterial effector proteins into eukaryotic host cells. Forms a ring-shaped multimeric structure with an apparent central pore in the outer membrane. Necessary for the secretion of Ipa invasins. This chain is Type 3 secretion system secretin, found in Shigella flexneri.